The chain runs to 196 residues: uncharacterized protein (196 aa).

FAD is bound by residues 15 to 22, 68 to 71, Tyr-107, and 123 to 126; these read SQGKFNKT, GWWM, and TWNA.

It belongs to the oxidoreductase MdaB family. Requires FAD as cofactor.

This is an uncharacterized protein from Schizosaccharomyces pombe (strain 972 / ATCC 24843) (Fission yeast).